Reading from the N-terminus, the 70-residue chain is Sec-independent protein translocase protein TatA (70 aa).

The helical transmembrane segment at 1 to 21 (MGIGVWELLLLFLIVLVVFGT) threads the bilayer. Positions 42–70 (MSENEDKPSEGGARTLEGEVVDKKEKDKV) are disordered. The span at 57–70 (LEGEVVDKKEKDKV) shows a compositional bias: basic and acidic residues.

Belongs to the TatA/E family. The Tat system comprises two distinct complexes: a TatABC complex, containing multiple copies of TatA, TatB and TatC subunits, and a separate TatA complex, containing only TatA subunits. Substrates initially bind to the TatABC complex, which probably triggers association of the separate TatA complex to form the active translocon.

It localises to the cell inner membrane. In terms of biological role, part of the twin-arginine translocation (Tat) system that transports large folded proteins containing a characteristic twin-arginine motif in their signal peptide across membranes. TatA could form the protein-conducting channel of the Tat system. The sequence is that of Sec-independent protein translocase protein TatA from Methylococcus capsulatus (strain ATCC 33009 / NCIMB 11132 / Bath).